Here is a 449-residue protein sequence, read N- to C-terminus: tRNA-2-methylthio-N(6)-dimethylallyladenosine synthase (449 aa).

In terms of domain architecture, MTTase N-terminal spans 13 to 128 (RRIFIETYGC…LPHLIGTVEK (116 aa)). Residues Cys-22, Cys-58, Cys-92, Cys-166, Cys-170, and Cys-173 each coordinate [4Fe-4S] cluster. Positions 152–383 (SRIKISGFIS…ITLQLKISLM (232 aa)) constitute a Radical SAM core domain. A TRAM domain is found at 386–449 (KENIGKTMEI…AATLFGDPKL (64 aa)).

This sequence belongs to the methylthiotransferase family. MiaB subfamily. In terms of assembly, monomer. The cofactor is [4Fe-4S] cluster.

Its subcellular location is the cytoplasm. It carries out the reaction N(6)-dimethylallyladenosine(37) in tRNA + (sulfur carrier)-SH + AH2 + 2 S-adenosyl-L-methionine = 2-methylsulfanyl-N(6)-dimethylallyladenosine(37) in tRNA + (sulfur carrier)-H + 5'-deoxyadenosine + L-methionine + A + S-adenosyl-L-homocysteine + 2 H(+). Functionally, catalyzes the methylthiolation of N6-(dimethylallyl)adenosine (i(6)A), leading to the formation of 2-methylthio-N6-(dimethylallyl)adenosine (ms(2)i(6)A) at position 37 in tRNAs that read codons beginning with uridine. In Azobacteroides pseudotrichonymphae genomovar. CFP2, this protein is tRNA-2-methylthio-N(6)-dimethylallyladenosine synthase.